The chain runs to 223 residues: Pre-hexon-linking protein VIII (223 aa).

Residue T64 is modified to Phosphothreonine; by host. A propeptide spanning residues 112 to 153 is cleaved from the precursor; the sequence is GALAPRDLYALTLRGRGIQLNEDLPLSASTLRPDGIFQLGGG. S170 is modified (phosphoserine; by host).

The protein belongs to the adenoviridae hexon-linking protein family. Interacts with the peripentonal hexons as well as the hexons in the facets. Part of a complex composed of the core-capsid bridging protein, the endosome lysis protein VI and the hexon-linking protein VIII; these interactions bridge the virus core to the capsid. Post-translationally, cleaved by the viral protease during virion maturation. May cause the middle segment to be shed from the capsid.

It is found in the virion. It localises to the host nucleus. Its function is as follows. Structural component of the virion that acts as a cement protein on the capsid interior and which glue the peripentonal hexons and group-of-nine hexons together. This is Pre-hexon-linking protein VIII from Porcine adenovirus A serotype 3 (PAdV-3).